The primary structure comprises 420 residues: Gamma-glutamyl phosphate reductase (420 aa).

The protein belongs to the gamma-glutamyl phosphate reductase family.

It localises to the cytoplasm. It catalyses the reaction L-glutamate 5-semialdehyde + phosphate + NADP(+) = L-glutamyl 5-phosphate + NADPH + H(+). It participates in amino-acid biosynthesis; L-proline biosynthesis; L-glutamate 5-semialdehyde from L-glutamate: step 2/2. Its function is as follows. Catalyzes the NADPH-dependent reduction of L-glutamate 5-phosphate into L-glutamate 5-semialdehyde and phosphate. The product spontaneously undergoes cyclization to form 1-pyrroline-5-carboxylate. The protein is Gamma-glutamyl phosphate reductase of Cereibacter sphaeroides (strain ATCC 17029 / ATH 2.4.9) (Rhodobacter sphaeroides).